A 91-amino-acid chain; its full sequence is Small ribosomal subunit protein bS18 (91 aa).

Belongs to the bacterial ribosomal protein bS18 family. In terms of assembly, part of the 30S ribosomal subunit. Forms a tight heterodimer with protein bS6.

In terms of biological role, binds as a heterodimer with protein bS6 to the central domain of the 16S rRNA, where it helps stabilize the platform of the 30S subunit. This is Small ribosomal subunit protein bS18 from Thiobacillus denitrificans (strain ATCC 25259 / T1).